Here is a 77-residue protein sequence, read N- to C-terminus: Translation initiation factor IF-1, chloroplastic (77 aa).

The region spanning 1 to 71 is the S1-like domain; that stretch reads MKEQKLIHEG…TRGRIIYRLR (71 aa).

The protein belongs to the IF-1 family. As to quaternary structure, component of the 30S ribosomal translation pre-initiation complex which assembles on the 30S ribosome in the order IF-2 and IF-3, IF-1 and N-formylmethionyl-tRNA(fMet); mRNA recruitment can occur at any time during PIC assembly.

It localises to the plastid. It is found in the chloroplast. One of the essential components for the initiation of protein synthesis. Stabilizes the binding of IF-2 and IF-3 on the 30S subunit to which N-formylmethionyl-tRNA(fMet) subsequently binds. Helps modulate mRNA selection, yielding the 30S pre-initiation complex (PIC). Upon addition of the 50S ribosomal subunit IF-1, IF-2 and IF-3 are released leaving the mature 70S translation initiation complex. In Ceratophyllum demersum (Rigid hornwort), this protein is Translation initiation factor IF-1, chloroplastic.